The chain runs to 463 residues: L-seryl-tRNA(Sec) selenium transferase (463 aa).

Lys295 bears the N6-(pyridoxal phosphate)lysine mark.

It belongs to the SelA family. As to quaternary structure, homodecamer; pentamer of dimers. Binds only one seryl-tRNA(Sec) per dimer. It depends on pyridoxal 5'-phosphate as a cofactor.

It localises to the cytoplasm. It catalyses the reaction L-seryl-tRNA(Sec) + selenophosphate + H(+) = L-selenocysteinyl-tRNA(Sec) + phosphate. The protein operates within aminoacyl-tRNA biosynthesis; selenocysteinyl-tRNA(Sec) biosynthesis; selenocysteinyl-tRNA(Sec) from L-seryl-tRNA(Sec) (bacterial route): step 1/1. In terms of biological role, converts seryl-tRNA(Sec) to selenocysteinyl-tRNA(Sec) required for selenoprotein biosynthesis. This chain is L-seryl-tRNA(Sec) selenium transferase, found in Serratia proteamaculans (strain 568).